Here is a 511-residue protein sequence, read N- to C-terminus: ATP synthase subunit beta, mitochondrial (511 aa).

The N-terminal 33 residues, 1–33 (MVLPRLYTATSRAAFKAAKQSAPLLSTSWKRCM), are a transit peptide targeting the mitochondrion. Position 112 is a phosphothreonine (threonine 112). Residue 190-197 (GGAGVGKT) participates in ATP binding. Phosphothreonine is present on threonine 237. Serine 373 is subject to Phosphoserine.

Belongs to the ATPase alpha/beta chains family. In terms of assembly, F-type ATPases have 2 components, CF(1) - the catalytic core - and CF(0) - the membrane proton channel. CF(1) has five subunits: alpha(3), beta(3), gamma(1), delta(1), epsilon(1). CF(0) has three main subunits: a, b and c.

It localises to the mitochondrion. It is found in the mitochondrion inner membrane. The enzyme catalyses ATP + H2O + 4 H(+)(in) = ADP + phosphate + 5 H(+)(out). In terms of biological role, mitochondrial membrane ATP synthase (F(1)F(0) ATP synthase or Complex V) produces ATP from ADP in the presence of a proton gradient across the membrane which is generated by electron transport complexes of the respiratory chain. F-type ATPases consist of two structural domains, F(1) - containing the extramembraneous catalytic core, and F(0) - containing the membrane proton channel, linked together by a central stalk and a peripheral stalk. During catalysis, ATP synthesis in the catalytic domain of F(1) is coupled via a rotary mechanism of the central stalk subunits to proton translocation. Subunits alpha and beta form the catalytic core in F(1). Rotation of the central stalk against the surrounding alpha(3)beta(3) subunits leads to hydrolysis of ATP in three separate catalytic sites on the beta subunits. The chain is ATP synthase subunit beta, mitochondrial (ATP2) from Saccharomyces cerevisiae (strain ATCC 204508 / S288c) (Baker's yeast).